We begin with the raw amino-acid sequence, 488 residues long: Glutamyl-tRNA(Gln) amidotransferase subunit A (488 aa).

Residues Lys-77 and Ser-152 each act as charge relay system in the active site. Ser-176 serves as the catalytic Acyl-ester intermediate.

The protein belongs to the amidase family. GatA subfamily. Heterotrimer of A, B and C subunits.

The enzyme catalyses L-glutamyl-tRNA(Gln) + L-glutamine + ATP + H2O = L-glutaminyl-tRNA(Gln) + L-glutamate + ADP + phosphate + H(+). Its function is as follows. Allows the formation of correctly charged Gln-tRNA(Gln) through the transamidation of misacylated Glu-tRNA(Gln) in organisms which lack glutaminyl-tRNA synthetase. The reaction takes place in the presence of glutamine and ATP through an activated gamma-phospho-Glu-tRNA(Gln). The protein is Glutamyl-tRNA(Gln) amidotransferase subunit A of Streptococcus pneumoniae (strain Hungary19A-6).